Consider the following 277-residue polypeptide: Putative pyruvate, phosphate dikinase regulatory protein (277 aa).

Glycine 156 to threonine 163 is a binding site for ADP.

The protein belongs to the pyruvate, phosphate/water dikinase regulatory protein family. PDRP subfamily.

It carries out the reaction N(tele)-phospho-L-histidyl/L-threonyl-[pyruvate, phosphate dikinase] + ADP = N(tele)-phospho-L-histidyl/O-phospho-L-threonyl-[pyruvate, phosphate dikinase] + AMP + H(+). The enzyme catalyses N(tele)-phospho-L-histidyl/O-phospho-L-threonyl-[pyruvate, phosphate dikinase] + phosphate + H(+) = N(tele)-phospho-L-histidyl/L-threonyl-[pyruvate, phosphate dikinase] + diphosphate. Its function is as follows. Bifunctional serine/threonine kinase and phosphorylase involved in the regulation of the pyruvate, phosphate dikinase (PPDK) by catalyzing its phosphorylation/dephosphorylation. This is Putative pyruvate, phosphate dikinase regulatory protein from Carboxydothermus hydrogenoformans (strain ATCC BAA-161 / DSM 6008 / Z-2901).